Consider the following 940-residue polypeptide: Phosphoenolpyruvate carboxylase (940 aa).

Residues His138 and Lys603 contribute to the active site.

Belongs to the PEPCase type 1 family. Requires Mg(2+) as cofactor.

It carries out the reaction oxaloacetate + phosphate = phosphoenolpyruvate + hydrogencarbonate. Functionally, forms oxaloacetate, a four-carbon dicarboxylic acid source for the tricarboxylic acid cycle. The protein is Phosphoenolpyruvate carboxylase of Streptococcus thermophilus (strain ATCC BAA-491 / LMD-9).